The sequence spans 1317 residues: Clustered mitochondria protein homolog (1317 aa).

Positions 382–626 (DITRSQESYL…RVTPLDVTWQ (245 aa)) constitute a Clu domain. The segment covering 669-689 (KAQEEAANKEQSSEVTESKEQ) has biased composition (basic and acidic residues). Disordered regions lie at residues 669–700 (KAQE…EALD) and 939–966 (ANGV…PSRA). 3 TPR repeats span residues 1040–1073 (AKLY…TERT), 1082–1115 (ILAY…WKII), and 1124–1157 (ITTM…CESL). Disordered stretches follow at residues 1252-1273 (VQPQ…ANAS) and 1288-1317 (GGDA…KSSA).

This sequence belongs to the CLU family. As to quaternary structure, may associate with the eukaryotic translation initiation factor 3 (eIF-3) complex.

Its subcellular location is the cytoplasm. MRNA-binding protein involved in proper cytoplasmic distribution of mitochondria. This chain is Clustered mitochondria protein homolog, found in Neosartorya fischeri (strain ATCC 1020 / DSM 3700 / CBS 544.65 / FGSC A1164 / JCM 1740 / NRRL 181 / WB 181) (Aspergillus fischerianus).